The chain runs to 589 residues: MDVRRRPVTKTLTAGEPLKSQNQHSSSLKASDALPLPLYLTNGLFFTMFFSVMYFLLHRWREKIRNSVPLHVVTLSELAALVLLVASVIYLLGFFGIGFVQSLIRPSPDSWDILEDDNAILEEDSRCEPCAAAIDCSLPPNLKIARMVPQKHKSAFADVVEEQKQSASATIIDEDEEIINAVVAGTTPSYSLESKLGDCLKAAAIRREALQRITGKSLDGLPLDGFDYESILGQCCEMPVGYVQVPVGIAGPLLLNETEYSVPMATTEGCLVASTNRGCKAIYASGGATSVLLKDGMTRAPVVRFGSAKRAAELKFFLEDPMNFETLALVFNKSSRFGRLQGIKCAIAGKNLYMRFTCSTGDAMGMNMVSKGVQNVLDFLQNDFPDMDVMGISGNYCSDKKPAAVNWIEGRGKSVVCEAIIKEEVVKKVLKTNVAALVELNMLKNLAGSAVAGALGGFNAHASNIVSAVYVAAGQDPAQNIESSHCITMMEAVNDGKDLHISVTMPSIEVGTVGGGTQLASQSACLNLLGVKGASKESPGPNSRLLASIVAGSVLAGELSLMSALAAGQLVKSHMKFNRSSKDVSKLSS.

Over 1-35 (MDVRRRPVTKTLTAGEPLKSQNQHSSSLKASDALP) the chain is Lumenal. A helical membrane pass occupies residues 36 to 56 (LPLYLTNGLFFTMFFSVMYFL). The Cytoplasmic portion of the chain corresponds to 57-79 (LHRWREKIRNSVPLHVVTLSELA). Residues 80–100 (ALVLLVASVIYLLGFFGIGFV) traverse the membrane as a helical segment. At 101-544 (QSLIRPSPDS…SKESPGPNSR (444 aa)) the chain is on the lumenal side. Residue Asn-256 is glycosylated (N-linked (GlcNAc...) asparagine). Glu-268 functions as the Charge relay system in the catalytic mechanism. A glycan (N-linked (GlcNAc...) asparagine) is linked at Asn-332. Active-site charge relay system residues include Lys-400 and Asp-476. Residues 545-565 (LLASIVAGSVLAGELSLMSAL) form a helical membrane-spanning segment. The Cytoplasmic segment spans residues 566–589 (AAGQLVKSHMKFNRSSKDVSKLSS). Catalysis depends on His-574, which acts as the Proton donor.

It belongs to the HMG-CoA reductase family.

The protein resides in the endoplasmic reticulum membrane. It catalyses the reaction (R)-mevalonate + 2 NADP(+) + CoA = (3S)-3-hydroxy-3-methylglutaryl-CoA + 2 NADPH + 2 H(+). The protein operates within metabolic intermediate biosynthesis; (R)-mevalonate biosynthesis; (R)-mevalonate from acetyl-CoA: step 3/3. In terms of biological role, catalyzes the synthesis of mevalonate, the specific precursor of all isoprenoid compounds present in plants. Component of the triterpene saponins (e.g. ginsenosides or panaxosides) and phytosterols biosynthetic pathways. Promotes triterpenes accumulation in roots. The chain is 3-hydroxy-3-methylglutaryl coenzyme A reductase 2-B from Panax ginseng (Korean ginseng).